A 611-amino-acid chain; its full sequence is Muscarinic acetylcholine receptor gar-3 (611 aa).

The Extracellular portion of the chain corresponds to 1 to 67; it reads MQSSSLGNAD…LLGEEGRMVM (67 aa). Asparagine 28 and asparagine 33 each carry an N-linked (GlcNAc...) asparagine glycan. A helical membrane pass occupies residues 68–88; the sequence is IVVIGAMFALVTSLGNLMVMV. Over 89–101 the chain is Cytoplasmic; sequence SFKIDKQLQTISN. A helical membrane pass occupies residues 102-122; the sequence is YFLFSLAVADIAIGVISIPMF. Over 123 to 140 the chain is Extracellular; that stretch reads TYYTAIQKWDLGYTMCQF. Cysteines 138 and 218 form a disulfide. The helical transmembrane segment at 141–161 threads the bilayer; it reads WLCIDYLMSNASVLNLLLISF. The Cytoplasmic segment spans residues 162-181; that stretch reads DRYFSVTRPLSYRPRRTTKK. The helical transmembrane segment at 182–202 threads the bilayer; it reads ALTMIACTYIISLILWPPWII. The Extracellular segment spans residues 203-227; the sequence is SWPYIEGKFTAEPGTCVVQFLQTNP. Residues 228–248 form a helical membrane-spanning segment; it reads YVTVGTAVAAFYLPVTIMCIL. Residues 249 to 525 lie on the Cytoplasmic side of the membrane; that stretch reads YTRVYWETQK…RKQESKAAKT (277 aa). Disordered stretches follow at residues 299–364, 377–432, 446–477, and 500–519; these read RRSM…SSEA, SHFA…NNNS, SRPS…NSEI, and FSSQ…RKQE. The segment covering 307–317 has biased composition (low complexity); sequence SSTSIIKSSGS. Basic and acidic residues predominate over residues 503–519; the sequence is QERKSEKEQRKNERKQE. Residues 526 to 546 form a helical membrane-spanning segment; sequence LSAILCAFIATWTPYNLIVCW. The Extracellular portion of the chain corresponds to 547–557; it reads EAFFPNTVPNV. The helical transmembrane segment at 558 to 578 threads the bilayer; that stretch reads LWTFSYFLCYINSTINPLCYA. Residues 579-611 are Cytoplasmic-facing; the sequence is LCNARFRHTYMRILRCKFKAERPTMNQGYVRRN.

Belongs to the G-protein coupled receptor 1 family. Muscarinic acetylcholine receptor subfamily.

It is found in the cell membrane. In terms of biological role, the muscarinic acetylcholine receptor mediates various cellular responses, including inhibition of adenylate cyclase, breakdown of phosphoinositides and modulation of potassium channels through the action of G proteins. Primary transducing effect is Pi turnover. Enhances the release of the neurotransmitter acetlycholine in cholinergic motor neurons, which in turn positively feeds back to depolarize body wall muscles and allows for the maintenance of normal body posture and locomotion. The protein is Muscarinic acetylcholine receptor gar-3 (gar-3) of Caenorhabditis elegans.